Reading from the N-terminus, the 171-residue chain is Large ribosomal subunit protein uL10 (171 aa).

The protein belongs to the universal ribosomal protein uL10 family. Part of the ribosomal stalk of the 50S ribosomal subunit. The N-terminus interacts with L11 and the large rRNA to form the base of the stalk. The C-terminus forms an elongated spine to which L12 dimers bind in a sequential fashion forming a multimeric L10(L12)X complex.

Its function is as follows. Forms part of the ribosomal stalk, playing a central role in the interaction of the ribosome with GTP-bound translation factors. The protein is Large ribosomal subunit protein uL10 of Zymomonas mobilis subsp. mobilis (strain ATCC 31821 / ZM4 / CP4).